Here is a 616-residue protein sequence, read N- to C-terminus: Probable beta-hexosaminidase ARB_01353 (616 aa).

The signal sequence occupies residues 1–20; sequence MRFAKALAITAVLLSGVVEA. Residues 96-117 are disordered; sequence KFDPFPDQSSKPKEKRQNAPPG. N-linked (GlcNAc...) asparagine glycosylation occurs at asparagine 333. Glutamate 361 acts as the Proton donor in catalysis.

This sequence belongs to the glycosyl hydrolase 20 family.

It is found in the secreted. The catalysed reaction is Hydrolysis of terminal non-reducing N-acetyl-D-hexosamine residues in N-acetyl-beta-D-hexosaminides.. In terms of biological role, beta-hexosaminidase that shows a broad substrate specificity. This Arthroderma benhamiae (strain ATCC MYA-4681 / CBS 112371) (Trichophyton mentagrophytes) protein is Probable beta-hexosaminidase ARB_01353.